A 777-amino-acid polypeptide reads, in one-letter code: Phosphoribosylformylglycinamidine synthase subunit PurL (777 aa).

Residue H50 is part of the active site. Positions 53 and 92 each coordinate ATP. Mg(2+) is bound at residue E94. Residues 95-98 and R117 each bind substrate; that span reads SHNH. Catalysis depends on H96, which acts as the Proton acceptor. A Mg(2+)-binding site is contributed by D118. Position 241 (Q241) interacts with substrate. D269 lines the Mg(2+) pocket. Substrate is bound at residue 313-315; it reads ESQ. Residues D516 and G553 each contribute to the ATP site. Mg(2+) is bound at residue N554. S556 serves as a coordination point for substrate.

It belongs to the FGAMS family. As to quaternary structure, monomer. Part of the FGAM synthase complex composed of 1 PurL, 1 PurQ and 2 PurS subunits.

It is found in the cytoplasm. The catalysed reaction is N(2)-formyl-N(1)-(5-phospho-beta-D-ribosyl)glycinamide + L-glutamine + ATP + H2O = 2-formamido-N(1)-(5-O-phospho-beta-D-ribosyl)acetamidine + L-glutamate + ADP + phosphate + H(+). It functions in the pathway purine metabolism; IMP biosynthesis via de novo pathway; 5-amino-1-(5-phospho-D-ribosyl)imidazole from N(2)-formyl-N(1)-(5-phospho-D-ribosyl)glycinamide: step 1/2. Its function is as follows. Part of the phosphoribosylformylglycinamidine synthase complex involved in the purines biosynthetic pathway. Catalyzes the ATP-dependent conversion of formylglycinamide ribonucleotide (FGAR) and glutamine to yield formylglycinamidine ribonucleotide (FGAM) and glutamate. The FGAM synthase complex is composed of three subunits. PurQ produces an ammonia molecule by converting glutamine to glutamate. PurL transfers the ammonia molecule to FGAR to form FGAM in an ATP-dependent manner. PurS interacts with PurQ and PurL and is thought to assist in the transfer of the ammonia molecule from PurQ to PurL. The chain is Phosphoribosylformylglycinamidine synthase subunit PurL from Synechococcus elongatus (strain ATCC 33912 / PCC 7942 / FACHB-805) (Anacystis nidulans R2).